We begin with the raw amino-acid sequence, 550 residues long: Methyl-accepting chemotaxis protein PcaY (550 aa).

Over 1 to 19 (MVPTRSTARMLANLKIRTG) the chain is Cytoplasmic. A helical transmembrane segment spans residues 20–40 (MFWVLSLFSLTLLFSTASAWW). Topologically, residues 41-198 (AALGSDQQIT…ESDRRLARAQ (158 aa)) are periplasmic. Residues 44 to 196 (GSDQQITELD…MLESDRRLAR (153 aa)) are ligand-binding domain. 2 residues coordinate benzoate: arginine 71 and asparagine 75. Residues arginine 71, asparagine 75, and tyrosine 135 each coordinate salicylate. Position 71-78 (71-78 (RSSANVSS)) interacts with 3,4-dihydroxybenzoate. L-quinate is bound by residues 71-78 (RSSANVSS), tyrosine 135, glutamine 142, and asparagine 158. Glutamine 169 contributes to the 3,4-dihydroxybenzoate binding site. A helical transmembrane segment spans residues 199 to 219 (LLSLCLLGVTVVLAVLCWAFI). The Cytoplasmic portion of the chain corresponds to 220-550 (AQRVLHPLRE…MTALVGRFKV (331 aa)). Positions 221–273 (QRVLHPLREAGGHFRRIASGDLSVPVQGQGNNEIGQLFHELQRMQQSQRDTLG) constitute an HAMP domain. The Methyl-accepting transducer domain maps to 278-514 (CARQLDAAAT…EVDRNLLNIR (237 aa)).

It belongs to the methyl-accepting chemotaxis (MCP) protein family. As to quaternary structure, ligand free PcaY_PP-ligand-binding domain (LBD) is present in a monomer-dimer equilibrium. Only the dimeric LBD is able to bind ligands which in turn causes dimer stabilization.

The protein resides in the cell inner membrane. Its function is as follows. Chemotactic-signal transducers respond to changes in the concentration of attractants and repellents in the environment, transduce a signal from the outside to the inside of the cell, and facilitate sensory adaptation through the variation of the level of methylation. PcaY recognizes a wide range of compounds containing a C6-membered ring with a carboxylate group. Binds preferentially compounds that serve as carbon sources and among them those that rapidly promote growth. Tightest binding compounds are quinate, shikimate, 3-dehydroshikimate and protocatechuate, which are at the interception of the biosynthetic shikimate and catabolic quinate pathways. This chain is Methyl-accepting chemotaxis protein PcaY, found in Pseudomonas putida (strain ATCC 47054 / DSM 6125 / CFBP 8728 / NCIMB 11950 / KT2440).